Here is a 263-residue protein sequence, read N- to C-terminus: MKTVTLSRLNAFKHAQEPFSCLTAYDASFAQHADAAGIDVLLVGDSLGMVLQGHASTLPVTLDDILYHTRCVARGKQRSLLMVDLPFMSNADTGQLLRDAGALMRAGAELVKIEGAGWMHEGVRELTRRGVPVCAHLGLTPQSVHQFGGYKVQGREQDDAQRIIDDARLLVEAGASVILLECVPAALGRAVRDAVDVPVIGIGAGPEVDGQILVMHDVIGVTHGRPPRFAKNFLAGRDSIQAAFEAYRDAVKTRQFPAEEHCF.

Mg(2+)-binding residues include Asp45 and Asp84. 3-methyl-2-oxobutanoate contacts are provided by residues 45 to 46 (DS), Asp84, and Lys112. Position 114 (Glu114) interacts with Mg(2+). Glu181 serves as the catalytic Proton acceptor.

It belongs to the PanB family. As to quaternary structure, homodecamer; pentamer of dimers. It depends on Mg(2+) as a cofactor.

It localises to the cytoplasm. The enzyme catalyses 3-methyl-2-oxobutanoate + (6R)-5,10-methylene-5,6,7,8-tetrahydrofolate + H2O = 2-dehydropantoate + (6S)-5,6,7,8-tetrahydrofolate. It functions in the pathway cofactor biosynthesis; (R)-pantothenate biosynthesis; (R)-pantoate from 3-methyl-2-oxobutanoate: step 1/2. In terms of biological role, catalyzes the reversible reaction in which hydroxymethyl group from 5,10-methylenetetrahydrofolate is transferred onto alpha-ketoisovalerate to form ketopantoate. This is 3-methyl-2-oxobutanoate hydroxymethyltransferase from Chromohalobacter salexigens (strain ATCC BAA-138 / DSM 3043 / CIP 106854 / NCIMB 13768 / 1H11).